The following is a 733-amino-acid chain: Protein PAT1 homolog 2 (733 aa).

Disordered regions lie at residues 42-75 (LDQE…PEAL) and 337-366 (LHPQ…PDPY). The segment covering 49-59 (EPVKLEDDHTK) has biased composition (basic and acidic residues). The span at 346-356 (SQRQRPQSSSR) shows a compositional bias: low complexity.

This sequence belongs to the PAT1 family. Interacts with ribonucleoprotein complex components. Interacts with cpeb. As to expression, oocyte-specific protein. Expressed throughout oogenesis but is not detectable in eggs, embryos, nor in adult tissues (at protein level).

It is found in the cytoplasm. The protein resides in the nucleus. Functionally, RNA-binding protein that acts as a translational repressor. When overexpressed, able to disperse P-bodies. This Xenopus laevis (African clawed frog) protein is Protein PAT1 homolog 2 (patl2).